The following is a 110-amino-acid chain: MKKLVSSVILALILFGFSWVSPAFAGDAGNGSKVFSANCNACHLGGKNVVNAAKTLNKSDLEKYAMLDLEAIKTQVTNGKGAMPAFGKRLTPDQIEDVATYVLEKAEKGW.

An N-terminal signal peptide occupies residues 1 to 25 (MKKLVSSVILALILFGFSWVSPAFA). Residues Cys39, Cys42, His43, and Met83 each contribute to the heme c site.

It belongs to the cytochrome c family. PetJ subfamily. In terms of assembly, monomer. Post-translationally, binds 1 heme c group covalently per subunit.

Its subcellular location is the cellular thylakoid lumen. In terms of biological role, functions as an electron carrier between membrane-bound cytochrome b6-f and photosystem I in oxygenic photosynthesis. This is Cytochrome c6 from Gloeothece citriformis (strain PCC 7424) (Cyanothece sp. (strain PCC 7424)).